Reading from the N-terminus, the 437-residue chain is Rhoptry apical surface protein 2 (437 aa).

Residues 45–179 form the C2 domain; it reads GCLGSLFFYL…PRINLSLHKL (135 aa). Positions 230 to 338 constitute a PH domain; it reads EGPLERLNAN…FIEKLRAYRE (109 aa). The interval 341-437 is disordered; that stretch reads STRVPSQKGA…SVVGDEEPQT (97 aa). Over residues 375-384 the composition is skewed to basic residues; it reads RKSGGKKSRR.

Interacts with RASP1. Interacts with RASP3.

The protein resides in the cytoplasmic vesicle. It localises to the secretory vesicle. Its subcellular location is the rhoptry membrane. Functionally, essential for tachyzoite invasion of host cells by controlling rhoptry secretion. Binds to phosphatidic acid (PA) and phosphatidylinositol 4,5-bisphosphate (PIP2) lipids and thus, likely contributes to the assembly of the machinery that docks or primes the rhoptry to the parasite cell membrane prior to the fusion with the host cell membrane. The polypeptide is Rhoptry apical surface protein 2 (Toxoplasma gondii (strain ATCC 50853 / GT1)).